Consider the following 174-residue polypeptide: Protein C (174 aa).

It belongs to the morbillivirus protein C family.

This is Protein C (P/V/C) from Phocine distemper virus (PDV).